Consider the following 172-residue polypeptide: Signal peptidase complex catalytic subunit SEC11 (172 aa).

The Cytoplasmic portion of the chain corresponds to M1–Q14. The chain crosses the membrane as a helical; Signal-anchor for type II membrane protein span at residues L15–A35. Over T36–E172 the chain is Lumenal. Residues S49, H90, and D115 each act as charge relay system in the active site. Residues V158 to I169 are C-terminal short (CTS) helix.

This sequence belongs to the peptidase S26B family. In terms of assembly, component of the signal peptidase complex (SPC) composed of a catalytic subunit SEC11 and three accessory subunits SPC1, SPC2 and SPC3. The complex induces a local thinning of the ER membrane which is used to measure the length of the signal peptide (SP) h-region of protein substrates. This ensures the selectivity of the complex towards h-regions shorter than 18-20 amino acids. SPC associates with the translocon complex.

Its subcellular location is the endoplasmic reticulum membrane. It carries out the reaction Cleavage of hydrophobic, N-terminal signal or leader sequences from secreted and periplasmic proteins.. Its function is as follows. Catalytic component of the signal peptidase complex (SPC) which catalyzes the cleavage of N-terminal signal sequences from nascent proteins as they are translocated into the lumen of the endoplasmic reticulum. Specifically cleaves N-terminal signal peptides that contain a hydrophobic alpha-helix (h-region) shorter than 18-20 amino acids. The sequence is that of Signal peptidase complex catalytic subunit SEC11 (SEC11) from Metarhizium robertsii (strain ARSEF 23 / ATCC MYA-3075) (Metarhizium anisopliae (strain ARSEF 23)).